The chain runs to 398 residues: Bifunctional enzyme IspD/IspF (398 aa).

Positions 1–234 are 2-C-methyl-D-erythritol 4-phosphate cytidylyltransferase; sequence MSNSKRTAAI…SRLGALLGDI (234 aa). A 2-C-methyl-D-erythritol 2,4-cyclodiphosphate synthase region spans residues 235-398; it reads RTGTGYDVHA…LPWGTNGLAD (164 aa). A divalent metal cation contacts are provided by Asp241 and His243. 4-CDP-2-C-methyl-D-erythritol 2-phosphate contacts are provided by residues 241–243 and 267–268; these read DVH and HS. His275 contacts a divalent metal cation. Residues 289-291, 365-368, Phe372, and Arg375 contribute to the 4-CDP-2-C-methyl-D-erythritol 2-phosphate site; these read DIG and TTSE.

It in the N-terminal section; belongs to the IspD/TarI cytidylyltransferase family. IspD subfamily. This sequence in the C-terminal section; belongs to the IspF family. The cofactor is a divalent metal cation.

The enzyme catalyses 2-C-methyl-D-erythritol 4-phosphate + CTP + H(+) = 4-CDP-2-C-methyl-D-erythritol + diphosphate. It carries out the reaction 4-CDP-2-C-methyl-D-erythritol 2-phosphate = 2-C-methyl-D-erythritol 2,4-cyclic diphosphate + CMP. The protein operates within isoprenoid biosynthesis; isopentenyl diphosphate biosynthesis via DXP pathway; isopentenyl diphosphate from 1-deoxy-D-xylulose 5-phosphate: step 2/6. It functions in the pathway isoprenoid biosynthesis; isopentenyl diphosphate biosynthesis via DXP pathway; isopentenyl diphosphate from 1-deoxy-D-xylulose 5-phosphate: step 4/6. Bifunctional enzyme that catalyzes the formation of 4-diphosphocytidyl-2-C-methyl-D-erythritol from CTP and 2-C-methyl-D-erythritol 4-phosphate (MEP) (IspD), and catalyzes the conversion of 4-diphosphocytidyl-2-C-methyl-D-erythritol 2-phosphate (CDP-ME2P) to 2-C-methyl-D-erythritol 2,4-cyclodiphosphate (ME-CPP) with a corresponding release of cytidine 5-monophosphate (CMP) (IspF). The polypeptide is Bifunctional enzyme IspD/IspF (Rhodopseudomonas palustris (strain BisB18)).